Reading from the N-terminus, the 599-residue chain is Prostaglandin G/H synthase 1 (599 aa).

The signal sequence occupies residues 1–23 (MSRSLLLWFLLFLLLLPPLPVLL). One can recognise an EGF-like domain in the interval 31–69 (PVNPCCYYPCQHQGICVRFGLDRYQCDCTRTGYSGPNCT). Intrachain disulfides connect cysteine 35–cysteine 46, cysteine 36–cysteine 158, cysteine 40–cysteine 56, and cysteine 58–cysteine 68. N-linked (GlcNAc...) asparagine glycans are attached at residues asparagine 67, asparagine 103, and asparagine 143. Catalysis depends on histidine 206, which acts as the Proton acceptor. The active-site For cyclooxygenase activity is the tyrosine 384. Histidine 387 is a heme b binding site. Cysteine 568 and cysteine 574 are oxidised to a cystine.

It belongs to the prostaglandin G/H synthase family. Homodimer. Heme b serves as cofactor.

It is found in the microsome membrane. Its subcellular location is the endoplasmic reticulum membrane. It carries out the reaction (5Z,8Z,11Z,14Z)-eicosatetraenoate + AH2 + 2 O2 = prostaglandin H2 + A + H2O. It catalyses the reaction (5Z,8Z,11Z,14Z)-eicosatetraenoate + 2 O2 = prostaglandin G2. The enzyme catalyses prostaglandin G2 + AH2 = prostaglandin H2 + A + H2O. The catalysed reaction is (9Z,12Z)-octadecadienoate + AH2 + O2 = (9R)-hydroxy-(10E,12Z)-octadecadienoate + A + H2O. It carries out the reaction (9Z,12Z)-octadecadienoate + AH2 + O2 = (9S)-hydroxy-(10E,12Z)-octadecadienoate + A + H2O. It catalyses the reaction (9Z,12Z)-octadecadienoate + AH2 + O2 = (13S)-hydroxy-(9Z,11E)-octadecadienoate + A + H2O. The enzyme catalyses (9Z,12Z)-octadecadienoate + AH2 + O2 = (13R)-hydroxy-(9Z,11E)-octadecadienoate + A + H2O. It participates in lipid metabolism; prostaglandin biosynthesis. The cyclooxygenase activity is inhibited by nonsteroidal anti-inflammatory drugs (NSAIDs) including ibuprofen, flurbiprofen, ketoprofen, naproxen, flurbiprofen, anirolac, fenclofenac and diclofenac. Its function is as follows. Dual cyclooxygenase and peroxidase that plays an important role in the biosynthesis pathway of prostanoids, a class of C20 oxylipins mainly derived from arachidonate ((5Z,8Z,11Z,14Z)-eicosatetraenoate, AA, C20:4(n-6)), with a particular role in the inflammatory response. The cyclooxygenase activity oxygenates AA to the hydroperoxy endoperoxide prostaglandin G2 (PGG2), and the peroxidase activity reduces PGG2 to the hydroxy endoperoxide prostaglandin H2 (PGH2), the precursor of all 2-series prostaglandins and thromboxanes. This complex transformation is initiated by abstraction of hydrogen at carbon 13 (with S-stereochemistry), followed by insertion of molecular O2 to form the endoperoxide bridge between carbon 9 and 11 that defines prostaglandins. The insertion of a second molecule of O2 (bis-oxygenase activity) yields a hydroperoxy group in PGG2 that is then reduced to PGH2 by two electrons. Involved in the constitutive production of prostanoids in particular in the stomach and platelets. In gastric epithelial cells, it is a key step in the generation of prostaglandins, such as prostaglandin E2 (PGE2), which plays an important role in cytoprotection. In platelets, it is involved in the generation of thromboxane A2 (TXA2), which promotes platelet activation and aggregation, vasoconstriction and proliferation of vascular smooth muscle cells. Can also use linoleate (LA, (9Z,12Z)-octadecadienoate, C18:2(n-6)) as substrate and produce hydroxyoctadecadienoates (HODEs) in a regio- and stereospecific manner, being (9R)-HODE ((9R)-hydroxy-(10E,12Z)-octadecadienoate) and (13S)-HODE ((13S)-hydroxy-(9Z,11E)-octadecadienoate) its major products. This chain is Prostaglandin G/H synthase 1, found in Homo sapiens (Human).